We begin with the raw amino-acid sequence, 353 residues long: Tsukushi (353 aa).

An N-terminal signal peptide occupies residues 1–17; the sequence is MLCTLFLLLLALGIVQT. An LRRNT domain is found at 18 to 59; that stretch reads TRPCFPGCQCEEETFGLFDSFSLIRVDCSSLGPHIVPVPIPL. 10 LRR repeats span residues 60-80, 86-107, 110-131, 133-154, 160-180, 186-207, 208-228, 231-253, 256-277, and 281-302; these read DTAHLDLSSNRLETVNESVLG, TLAGLDLSHNLLTSITPTAFSR, YLESLDLSHNGLAALPAEVFTS, PLSDINLSHNRLREVSISAFTT, ALHVDLSHNLIHRLLPYPARA, TIQSLNLSWNRLRAVPDLRDLP, LRYLSLDGNPLATINPGAFMG, GLTHLSLASLQGILQLPPHGFRE, GLQVLDLSGNPKLKWAGAEVFS, and LLQELDLSGSSLVPLPETLLHH. Residue N75 is glycosylated (N-linked (GlcNAc...) asparagine). N138 carries an N-linked (GlcNAc...) asparagine glycan. Residue N191 is glycosylated (N-linked (GlcNAc...) asparagine).

In terms of assembly, interacts with FZD4 (via FZ domain); competes with WNT2B for binding to FZD4, inhibiting Wnt signaling and repressing peripheral eye development. Interacts with TGFB1; the interaction contributes to regulation of the hair cycle. Interacts with netrin. Interacts with CCN2. As to expression, expressed at high levels in the liver, small intestine and placenta. Not or barely detectable in other tissues, including whole pancreas, adipose tissues, skeletal muscle, kidney, spleen, brain, lung and testis.

It is found in the secreted. In terms of biological role, contributes to various developmental events and other processes such as wound healing and cholesterol homeostasis through its interactions with multiple signaling pathways. Wnt signaling inhibitor which competes with WNT2B for binding to Wnt receptor FZD4 and represses WNT2B-dependent development of the peripheral eye. Plays a role in regulating the hair cycle by controlling TGFB1 signaling. Required for the development of the anterior commissure in the brain by inhibiting neurite outgrowth. Essential for terminal differentiation of hippocampal neural stem cells. Plays a role in regulating bone elongation and bone mass by modulating growth plate chondrocyte function and overall body size. Required for development of the inner ear through its involvement in stereocilia formation in inner hair cells. Facilitates wound healing by inhibiting secretion of TGFB1 from macrophages which prevents myofibroblast differentiation, maintaining inflammatory cell quiescence. Plays a role in cholesterol homeostasis by reducing circulating high-density lipoprotein cholesterol, lowering cholesterol efflux capacity and decreasing cholesterol-to-bile acid conversion in the liver. In one study, shown to negatively regulate sympathetic innervation in brown fat, leading to reduced energy expenditure. In another study, shown not to affect brown fat thermogenic capacity, body weight gain or glucose homeostasis. This is Tsukushi (Tsku) from Rattus norvegicus (Rat).